A 455-amino-acid polypeptide reads, in one-letter code: Ribosomal protein uS12 methylthiotransferase RimO (455 aa).

Residues 1–114 (MKYHIVTLGC…INALVGQLER (114 aa)) enclose the MTTase N-terminal domain. [4Fe-4S] cluster-binding residues include Cys-10, Cys-46, Cys-78, Cys-166, Cys-170, and Cys-173. Residues 152–383 (THQTPSAYLK…MRLQQTISYT (232 aa)) form the Radical SAM core domain. In terms of domain architecture, TRAM spans 386 to 455 (QRWVGRTIKV…AYDLWGEALS (70 aa)).

It belongs to the methylthiotransferase family. RimO subfamily. [4Fe-4S] cluster serves as cofactor.

It is found in the cytoplasm. The enzyme catalyses L-aspartate(89)-[ribosomal protein uS12]-hydrogen + (sulfur carrier)-SH + AH2 + 2 S-adenosyl-L-methionine = 3-methylsulfanyl-L-aspartate(89)-[ribosomal protein uS12]-hydrogen + (sulfur carrier)-H + 5'-deoxyadenosine + L-methionine + A + S-adenosyl-L-homocysteine + 2 H(+). Its function is as follows. Catalyzes the methylthiolation of an aspartic acid residue of ribosomal protein uS12. The protein is Ribosomal protein uS12 methylthiotransferase RimO of Chloroflexus aurantiacus (strain ATCC 29366 / DSM 635 / J-10-fl).